The chain runs to 164 residues: Large ribosomal subunit protein uL10 (164 aa).

This sequence belongs to the universal ribosomal protein uL10 family. Part of the ribosomal stalk of the 50S ribosomal subunit. The N-terminus interacts with L11 and the large rRNA to form the base of the stalk. The C-terminus forms an elongated spine to which L12 dimers bind in a sequential fashion forming a multimeric L10(L12)X complex.

Forms part of the ribosomal stalk, playing a central role in the interaction of the ribosome with GTP-bound translation factors. The protein is Large ribosomal subunit protein uL10 of Helicobacter pylori (strain G27).